The primary structure comprises 113 residues: Carboxysome shell protein CcmK1 (113 aa).

In terms of domain architecture, BMC spans 4 to 90; it reads AVGMIETLGF…PHENLEYVLP (87 aa).

Belongs to the bacterial microcompartments protein family. CcmK subfamily. As to quaternary structure, homohexamer. Interacts preferentially with CcmK2 and CcmK4a rather than itself in vitro.

The protein localises to the carboxysome. In terms of biological role, one of the shell proteins of the carboxysome, a polyhedral inclusion where RuBisCO (ribulose bisphosphate carboxylase, rbcL-rbcS) is sequestered. Assembles into hexamers which make sheets that form the facets of the polyhedral carboxysome. The hexamer central pore probably regulates metabolite flux. The polypeptide is Carboxysome shell protein CcmK1 (Thermosynechococcus vestitus (strain NIES-2133 / IAM M-273 / BP-1)).